We begin with the raw amino-acid sequence, 306 residues long: Large ribosomal subunit protein uL18 (306 aa).

It belongs to the universal ribosomal protein uL18 family. As to quaternary structure, component of the large ribosomal subunit (LSU).

It localises to the cytoplasm. Its subcellular location is the nucleus. In terms of biological role, component of the ribosome, a large ribonucleoprotein complex responsible for the synthesis of proteins in the cell. The small ribosomal subunit (SSU) binds messenger RNAs (mRNAs) and translates the encoded message by selecting cognate aminoacyl-transfer RNA (tRNA) molecules. The large subunit (LSU) contains the ribosomal catalytic site termed the peptidyl transferase center (PTC), which catalyzes the formation of peptide bonds, thereby polymerizing the amino acids delivered by tRNAs into a polypeptide chain. The nascent polypeptides leave the ribosome through a tunnel in the LSU and interact with protein factors that function in enzymatic processing, targeting, and the membrane insertion of nascent chains at the exit of the ribosomal tunnel. The polypeptide is Large ribosomal subunit protein uL18 (RPL5) (Theileria annulata).